A 197-amino-acid chain; its full sequence is Probable proteasome subunit beta type-4 (197 aa).

Belongs to the peptidase T1B family. As to quaternary structure, the 26S proteasome consists of a 20S proteasome core and two 19S regulatory subunits. The 20S proteasome core is composed of 28 subunits that are arranged in four stacked rings, resulting in a barrel-shaped structure. The two end rings are each formed by seven alpha subunits, and the two central rings are each formed by seven beta subunits. The catalytic chamber with the active sites is on the inside of the barrel.

It localises to the cytoplasm. Its subcellular location is the nucleus. In terms of biological role, non-catalytic component of the proteasome which degrades poly-ubiquitinated proteins in the cytoplasm and in the nucleus. It is essential for the regulated turnover of proteins and for the removal of misfolded proteins. The proteasome is a multicatalytic proteinase complex that is characterized by its ability to cleave peptides with Arg, Phe, Tyr, Leu, and Glu adjacent to the leaving group at neutral or slightly basic pH. It has an ATP-dependent proteolytic activity. The sequence is that of Probable proteasome subunit beta type-4 (PRE1) from Encephalitozoon cuniculi (strain GB-M1) (Microsporidian parasite).